The sequence spans 320 residues: ATP-dependent 6-phosphofructokinase (320 aa).

ATP is bound at residue Gly12. 22–26 contributes to the ADP binding site; sequence RAVVR. Residues 73-74 and 103-106 contribute to the ATP site; these read RF and GDGS. Asp104 contributes to the Mg(2+) binding site. Position 126–128 (126–128) interacts with substrate; sequence TID. Residue Asp128 is the Proton acceptor of the active site. Arg155 serves as a coordination point for ADP. Substrate is bound by residues Arg163 and 170–172; that span reads MGR. ADP contacts are provided by residues 186 to 188 and 214 to 216; these read GAE and KNH. Substrate-binding positions include Glu223, Arg244, and 250 to 253; that span reads HIQR.

Belongs to the phosphofructokinase type A (PFKA) family. ATP-dependent PFK group I subfamily. Prokaryotic clade 'B1' sub-subfamily. Homotetramer. Mg(2+) is required as a cofactor.

Its subcellular location is the cytoplasm. The enzyme catalyses beta-D-fructose 6-phosphate + ATP = beta-D-fructose 1,6-bisphosphate + ADP + H(+). Its pathway is carbohydrate degradation; glycolysis; D-glyceraldehyde 3-phosphate and glycerone phosphate from D-glucose: step 3/4. Its activity is regulated as follows. Allosterically activated by ADP and other diphosphonucleosides, and allosterically inhibited by phosphoenolpyruvate. Functionally, catalyzes the phosphorylation of D-fructose 6-phosphate to fructose 1,6-bisphosphate by ATP, the first committing step of glycolysis. This is ATP-dependent 6-phosphofructokinase from Teredinibacter turnerae (strain ATCC 39867 / T7901).